A 386-amino-acid chain; its full sequence is 8-amino-7-oxononanoate synthase (386 aa).

Residues Arg22 and Arg29 each coordinate substrate. 109–110 (GY) is a pyridoxal 5'-phosphate binding site. His134 lines the substrate pocket. Residues Ser182, 207 to 210 (DDAH), and 237 to 240 (TLSK) contribute to the pyridoxal 5'-phosphate site. At Lys240 the chain carries N6-(pyridoxal phosphate)lysine. Thr349 contributes to the substrate binding site.

The protein belongs to the class-II pyridoxal-phosphate-dependent aminotransferase family. BioF subfamily. As to quaternary structure, homodimer. Pyridoxal 5'-phosphate serves as cofactor.

It carries out the reaction 6-carboxyhexanoyl-[ACP] + L-alanine + H(+) = (8S)-8-amino-7-oxononanoate + holo-[ACP] + CO2. Its pathway is cofactor biosynthesis; biotin biosynthesis. Its function is as follows. Catalyzes the decarboxylative condensation of pimeloyl-[acyl-carrier protein] and L-alanine to produce 8-amino-7-oxononanoate (AON), [acyl-carrier protein], and carbon dioxide. This chain is 8-amino-7-oxononanoate synthase, found in Beijerinckia indica subsp. indica (strain ATCC 9039 / DSM 1715 / NCIMB 8712).